The primary structure comprises 37 residues: Large ribosomal subunit protein bL36 (37 aa).

The protein belongs to the bacterial ribosomal protein bL36 family.

The polypeptide is Large ribosomal subunit protein bL36 (Cyanothece sp. (strain PCC 7425 / ATCC 29141)).